Here is a 140-residue protein sequence, read N- to C-terminus: Putative nickel-responsive regulator (140 aa).

Residues His-81, His-92, His-94, and Cys-100 each contribute to the Ni(2+) site.

This sequence belongs to the transcriptional regulatory CopG/NikR family. The cofactor is Ni(2+).

Its function is as follows. Transcriptional regulator. The chain is Putative nickel-responsive regulator from Methanocella arvoryzae (strain DSM 22066 / NBRC 105507 / MRE50).